Reading from the N-terminus, the 585-residue chain is Glutamate decarboxylase 2 (585 aa).

The span at 1-14 (MASPGSGFWSFGSE) shows a compositional bias: low complexity. Residues 1–24 (MASPGSGFWSFGSEDGSGDSENPG) are disordered. Phosphoserine is present on residues Ser-3, Ser-6, Ser-10, and Ser-13. 2 S-palmitoyl cysteine lipidation sites follow: Cys-30 and Cys-45. Position 181–183 (181–183 (QLS)) interacts with substrate. N6-(pyridoxal phosphate)lysine is present on Lys-396. Arg-558 is a binding site for substrate.

This sequence belongs to the group II decarboxylase family. Homodimer. It depends on pyridoxal 5'-phosphate as a cofactor. In terms of processing, phosphorylated; which does not affect kinetic parameters or subcellular location. Post-translationally, palmitoylated; which is required for presynaptic clustering.

It is found in the cytoplasm. The protein localises to the cytosol. It localises to the cytoplasmic vesicle. The protein resides in the presynaptic cell membrane. Its subcellular location is the golgi apparatus membrane. The catalysed reaction is L-glutamate + H(+) = 4-aminobutanoate + CO2. Catalyzes the production of GABA. This is Glutamate decarboxylase 2 from Homo sapiens (Human).